The chain runs to 253 residues: Ubiquinone/menaquinone biosynthesis C-methyltransferase UbiE (253 aa).

Residues T76, D97, and 125–126 each bind S-adenosyl-L-methionine; that span reads DA.

Belongs to the class I-like SAM-binding methyltransferase superfamily. MenG/UbiE family.

It catalyses the reaction a 2-demethylmenaquinol + S-adenosyl-L-methionine = a menaquinol + S-adenosyl-L-homocysteine + H(+). The enzyme catalyses a 2-methoxy-6-(all-trans-polyprenyl)benzene-1,4-diol + S-adenosyl-L-methionine = a 5-methoxy-2-methyl-3-(all-trans-polyprenyl)benzene-1,4-diol + S-adenosyl-L-homocysteine + H(+). It participates in quinol/quinone metabolism; menaquinone biosynthesis; menaquinol from 1,4-dihydroxy-2-naphthoate: step 2/2. The protein operates within cofactor biosynthesis; ubiquinone biosynthesis. Methyltransferase required for the conversion of demethylmenaquinol (DMKH2) to menaquinol (MKH2) and the conversion of 2-polyprenyl-6-methoxy-1,4-benzoquinol (DDMQH2) to 2-polyprenyl-3-methyl-6-methoxy-1,4-benzoquinol (DMQH2). This is Ubiquinone/menaquinone biosynthesis C-methyltransferase UbiE from Azotobacter vinelandii (strain DJ / ATCC BAA-1303).